Reading from the N-terminus, the 349-residue chain is Interferon regulatory factor 2 (349 aa).

A DNA-binding region (IRF tryptophan pentad repeat) is located at residues 5-113; it reads RMRMRPWLEE…NAFRVYRMLP (109 aa). N6-acetyllysine is present on residues Lys75 and Lys78. A disordered region spans residues 117–148; sequence RPSKKGKKPKTEKEDKVKHIKQEPVESSLGLS. Positions 125-140 are enriched in basic and acidic residues; the sequence is PKTEKEDKVKHIKQEP. Residue Lys137 forms a Glycyl lysine isopeptide (Lys-Gly) (interchain with G-Cter in SUMO); alternate linkage. Residue Lys137 forms a Glycyl lysine isopeptide (Lys-Gly) (interchain with G-Cter in SUMO2); alternate linkage. Residue Lys166 forms a Glycyl lysine isopeptide (Lys-Gly) (interchain with G-Cter in SUMO) linkage. Residue Ser225 is modified to Phosphoserine. A compositionally biased stretch (polar residues) spans 228–239; the sequence is SSYAESETTDSV. The segment at 228–251 is disordered; it reads SSYAESETTDSVPSDEESAEGRPH. A Glycyl lysine isopeptide (Lys-Gly) (interchain with G-Cter in SUMO2) cross-link involves residue Lys260. A Glycyl lysine isopeptide (Lys-Gly) (interchain with G-Cter in SUMO) cross-link involves residue Lys293. Residues 297 to 349 form a disordered region; it reads NPVPYNSSWPPFQDLPLSSSMTPASSSSRPDRETRASVIKKTSDITQARVKSC. Residues 314-324 are compositionally biased toward low complexity; it reads SSSMTPASSSS.

The protein belongs to the IRF family. As to quaternary structure, interacts with BRD7, IRF2BP1 and IRF2BP2. Interacts with CREBBP in growing cells; the interaction acetylates IRF2 and regulates IRF2-dependent H4 promoter activity. Post-translationally, acetylated by CBP/ p300 during cell-growth. Acetylation on Lys-75 is required for stimulation of H4 promoter activity. The major sites of sumoylation are Lys-137 and Lys-293. Sumoylation with SUMO1 increases its transcriptional repressor activity on IRF1 and diminishes its ability to activate ISRE and H4 promoter. In terms of tissue distribution, expressed throughout the epithelium of the colon. Also expressed in lamina propria.

It is found in the nucleus. Functionally, specifically binds to the upstream regulatory region of type I IFN and IFN-inducible MHC class I genes (the interferon consensus sequence (ICS)) and represses those genes. Also acts as an activator for several genes including H4 and IL7. Constitutively binds to the ISRE promoter to activate IL7. Involved in cell cycle regulation through binding the site II (HiNF-M) promoter region of H4 and activating transcription during cell growth. Antagonizes IRF1 transcriptional activation. In Homo sapiens (Human), this protein is Interferon regulatory factor 2 (IRF2).